The sequence spans 218 residues: Stress response regulator protein 1 (218 aa).

The region spanning 90–209 is the Response regulatory domain; that stretch reads RFLLVDDNSI…YRVVLDVVDN (120 aa). The residue at position 142 (D142) is a 4-aspartylphosphate.

Required for stress adaptation, morphogenesis and virulence. The chain is Stress response regulator protein 1 (SRR1) from Meyerozyma guilliermondii (strain ATCC 6260 / CBS 566 / DSM 6381 / JCM 1539 / NBRC 10279 / NRRL Y-324) (Yeast).